We begin with the raw amino-acid sequence, 390 residues long: Phosphopentomutase (390 aa).

Mn(2+) contacts are provided by Asp11, Asp283, His288, Asp324, His325, and His336.

This sequence belongs to the phosphopentomutase family. The cofactor is Mn(2+).

The protein localises to the cytoplasm. The catalysed reaction is 2-deoxy-alpha-D-ribose 1-phosphate = 2-deoxy-D-ribose 5-phosphate. The enzyme catalyses alpha-D-ribose 1-phosphate = D-ribose 5-phosphate. It participates in carbohydrate degradation; 2-deoxy-D-ribose 1-phosphate degradation; D-glyceraldehyde 3-phosphate and acetaldehyde from 2-deoxy-alpha-D-ribose 1-phosphate: step 1/2. Isomerase that catalyzes the conversion of deoxy-ribose 1-phosphate (dRib-1-P) and ribose 1-phosphate (Rib-1-P) to deoxy-ribose 5-phosphate (dRib-5-P) and ribose 5-phosphate (Rib-5-P), respectively. The sequence is that of Phosphopentomutase from Clostridium novyi (strain NT).